Consider the following 291-residue polypeptide: ATP synthase subunit a (291 aa).

Transmembrane regions (helical) follow at residues 50–70 (LDSM…FWIV), 108–128 (IAPL…MDLI), 129–149 (PVDW…GMDP), 161–181 (DPNI…FYSI), 203–223 (PVAK…TFLA), 241–261 (LIFI…SVPW), and 262–282 (AIFH…LTIV).

This sequence belongs to the ATPase A chain family. In terms of assembly, F-type ATPases have 2 components, CF(1) - the catalytic core - and CF(0) - the membrane proton channel. CF(1) has five subunits: alpha(3), beta(3), gamma(1), delta(1), epsilon(1). CF(0) has three main subunits: a(1), b(2) and c(9-12). The alpha and beta chains form an alternating ring which encloses part of the gamma chain. CF(1) is attached to CF(0) by a central stalk formed by the gamma and epsilon chains, while a peripheral stalk is formed by the delta and b chains.

It localises to the cell inner membrane. Functionally, key component of the proton channel; it plays a direct role in the translocation of protons across the membrane. This is ATP synthase subunit a from Acinetobacter baumannii (strain AB307-0294).